The primary structure comprises 293 residues: MQPFKTIGLIGRLGSPNAVETLKRLLRFLGTRELDVIVDERTATVLLNHGYPEASRSRLGELCDLVIVVGGDGSLLSAARVLCQTQTPVLGVNRGRLGFLTDISPDDVEERIGEVLDGHFESEQRFLLEAEVFRAGKQVGTASGLNDVVIHPGKAARMIEFELFIDGQFVYSQRSDGLIIATPTGSTAYALSGGGPIVHPRLEAITLVPMFPHTLSSRPIVVDAASEVTIHIGETNQAYPHVSCDGQTQVVSKPGDIMVVRRKRERLTLIHPRGHNYFETCRTKLGWSSRLGE.

The active-site Proton acceptor is Asp72. Residues 72 to 73 (DG), 146 to 147 (ND), Arg157, Arg174, Asp176, 187 to 192 (TAYALS), and Gln247 each bind NAD(+).

The protein belongs to the NAD kinase family. A divalent metal cation serves as cofactor.

The protein localises to the cytoplasm. The catalysed reaction is NAD(+) + ATP = ADP + NADP(+) + H(+). Its function is as follows. Involved in the regulation of the intracellular balance of NAD and NADP, and is a key enzyme in the biosynthesis of NADP. Catalyzes specifically the phosphorylation on 2'-hydroxyl of the adenosine moiety of NAD to yield NADP. In Chromohalobacter salexigens (strain ATCC BAA-138 / DSM 3043 / CIP 106854 / NCIMB 13768 / 1H11), this protein is NAD kinase.